The sequence spans 366 residues: Inactive protein RESTRICTED TEV MOVEMENT 2 (366 aa).

One can recognise a sHSP domain in the interval 14–121 (VQYEDFVPKS…LPETSRTEAA (108 aa)). One copy of the A-1 repeat lies at 129–133 (LEEKR). Positions 129–220 (LEEKRLLEES…LEERRLEERK (92 aa)) are 6 X 5 AA repeats A of L-E-E-[SKR]-[ERK]. One copy of the A-2 repeat lies at 135-139 (LEESR). The A-3 repeat unit spans residues 156 to 160 (LEEKE). Residues 163 to 176 (IRKLQEEAKAKEEA) form a B-1 repeat. The interval 163–206 (IRKLQEEAKAKEEAEMRKLQEEAKANEEAAAKKLQEEIEAKEKL) is 3 X 14 AA repeats B of [IMA]-[RK]-K-L-Q-E-E-A-K-A-K-E-[EK]-[LA]. A B-2 repeat occupies 178-191 (MRKLQEEAKANEEA). Residues 193 to 205 (AKKLQEEIEAKEK) form a B-3 repeat. The A-4 repeat unit spans residues 206-210 (LEERK). The A-5 repeat unit spans residues 211 to 215 (LEERR). The stretch at 216–220 (LEERK) is one A-6 repeat. Residues 322-342 (LMMNVGVAALVIFALGAYVSY) traverse the membrane as a helical segment. The segment at 345-366 (CSSSSSSSSSSPSSSSSSTKPE) is disordered. The segment covering 346 to 366 (SSSSSSSSSSPSSSSSSTKPE) has biased composition (low complexity).

Belongs to the small heat shock protein (HSP20) family.

The protein localises to the cell membrane. In terms of biological role, seems to not be involved in heat resistance. Unable to mediate restriction of long-distance movement of the pathogenic tobacco etch virus (TEV) without causing a hypersensitive response or inducing systemic acquired resistance. This is Inactive protein RESTRICTED TEV MOVEMENT 2 (RTM2) from Arabidopsis thaliana (Mouse-ear cress).